Consider the following 366-residue polypeptide: Phospho-N-acetylmuramoyl-pentapeptide-transferase (366 aa).

Transmembrane regions (helical) follow at residues 27 to 47 (AALF…INSL), 71 to 91 (TPTM…LLWA), 93 to 113 (LSNV…AIGF), 134 to 154 (LGIE…TALA), 174 to 194 (FLIN…VGAG), 205 to 225 (GLAI…AYLA), 245 to 265 (LAVV…FNAP), 268 to 288 (AIFM…TVAV), 294 to 314 (IVMA…IIQV), and 343 to 363 (QVVI…LSTL).

The protein belongs to the glycosyltransferase 4 family. MraY subfamily. Mg(2+) serves as cofactor.

It localises to the cell inner membrane. The enzyme catalyses UDP-N-acetyl-alpha-D-muramoyl-L-alanyl-gamma-D-glutamyl-meso-2,6-diaminopimeloyl-D-alanyl-D-alanine + di-trans,octa-cis-undecaprenyl phosphate = di-trans,octa-cis-undecaprenyl diphospho-N-acetyl-alpha-D-muramoyl-L-alanyl-D-glutamyl-meso-2,6-diaminopimeloyl-D-alanyl-D-alanine + UMP. The protein operates within cell wall biogenesis; peptidoglycan biosynthesis. Its function is as follows. Catalyzes the initial step of the lipid cycle reactions in the biosynthesis of the cell wall peptidoglycan: transfers peptidoglycan precursor phospho-MurNAc-pentapeptide from UDP-MurNAc-pentapeptide onto the lipid carrier undecaprenyl phosphate, yielding undecaprenyl-pyrophosphoryl-MurNAc-pentapeptide, known as lipid I. The protein is Phospho-N-acetylmuramoyl-pentapeptide-transferase of Rhizobium etli (strain CIAT 652).